Here is a 919-residue protein sequence, read N- to C-terminus: Lipoxygenase 3, chloroplastic (919 aa).

The transit peptide at 1-52 directs the protein to the chloroplast; that stretch reads MALAKELMGYPLITERSSLVSSASHFKKRTQSTQFSINPFDRRPRKTKSGVV. A PLAT domain is found at 86 to 222; sequence VRAVVTVRNK…DHPDKRIFFT (137 aa). The Lipoxygenase domain maps to 225 to 919; it reads PYLPNETPSG…CRGVPNSVSI (695 aa). The interval 272–310 is disordered; sequence PDKSSELSRPKLGGKEVPYPRRCRTGRQSTVSDKDAESR. Fe cation contacts are provided by H578, H583, H770, N774, and I919.

The protein belongs to the lipoxygenase family. Requires Fe cation as cofactor. As to expression, expressed in roots and leaves.

The protein localises to the plastid. It is found in the chloroplast. The catalysed reaction is (9Z,12Z)-octadecadienoate + O2 = (13S)-hydroperoxy-(9Z,11E)-octadecadienoate. The enzyme catalyses (9Z,12Z,15Z)-octadecatrienoate + O2 = (13S)-hydroperoxy-(9Z,11E,15Z)-octadecatrienoate. It functions in the pathway lipid metabolism; oxylipin biosynthesis. In terms of biological role, 13S-lipoxygenase that can use linolenic acid as substrates. Plant lipoxygenases may be involved in a number of diverse aspects of plant physiology including growth and development, pest resistance, and senescence or responses to wounding. Catalyzes the hydroperoxidation of lipids containing a cis,cis-1,4-pentadiene structure. The polypeptide is Lipoxygenase 3, chloroplastic (LOX3) (Arabidopsis thaliana (Mouse-ear cress)).